The sequence spans 1358 residues: DNA-directed RNA polymerase subunit beta (1358 aa).

This sequence belongs to the RNA polymerase beta chain family. The RNAP catalytic core consists of 2 alpha, 1 beta, 1 beta' and 1 omega subunit. When a sigma factor is associated with the core the holoenzyme is formed, which can initiate transcription.

The enzyme catalyses RNA(n) + a ribonucleoside 5'-triphosphate = RNA(n+1) + diphosphate. Its function is as follows. DNA-dependent RNA polymerase catalyzes the transcription of DNA into RNA using the four ribonucleoside triphosphates as substrates. The polypeptide is DNA-directed RNA polymerase subunit beta (Chromohalobacter salexigens (strain ATCC BAA-138 / DSM 3043 / CIP 106854 / NCIMB 13768 / 1H11)).